A 283-amino-acid polypeptide reads, in one-letter code: Type III pantothenate kinase (283 aa).

9-16 contributes to the ATP binding site; sequence DIGNTRLK. Residues tyrosine 116 and 123-126 each bind substrate; that span reads GVDR. Aspartate 125 (proton acceptor) is an active-site residue. ATP is bound at residue threonine 149. Substrate is bound at residue threonine 211.

The protein belongs to the type III pantothenate kinase family. In terms of assembly, homodimer. It depends on NH4(+) as a cofactor. The cofactor is K(+).

The protein localises to the cytoplasm. It carries out the reaction (R)-pantothenate + ATP = (R)-4'-phosphopantothenate + ADP + H(+). It participates in cofactor biosynthesis; coenzyme A biosynthesis; CoA from (R)-pantothenate: step 1/5. Catalyzes the phosphorylation of pantothenate (Pan), the first step in CoA biosynthesis. This chain is Type III pantothenate kinase, found in Cupriavidus taiwanensis (strain DSM 17343 / BCRC 17206 / CCUG 44338 / CIP 107171 / LMG 19424 / R1) (Ralstonia taiwanensis (strain LMG 19424)).